A 422-amino-acid polypeptide reads, in one-letter code: Tyrosine--tRNA ligase (422 aa).

Y35 contributes to the L-tyrosine binding site. The 'HIGH' region motif lies at P40–H49. The L-tyrosine site is built by Y170 and Q174. The 'KMSKS' region signature appears at K231–T235. An ATP-binding site is contributed by K234. The S4 RNA-binding domain occupies A353 to I419.

The protein belongs to the class-I aminoacyl-tRNA synthetase family. TyrS type 1 subfamily. As to quaternary structure, homodimer.

It is found in the cytoplasm. It catalyses the reaction tRNA(Tyr) + L-tyrosine + ATP = L-tyrosyl-tRNA(Tyr) + AMP + diphosphate + H(+). Catalyzes the attachment of tyrosine to tRNA(Tyr) in a two-step reaction: tyrosine is first activated by ATP to form Tyr-AMP and then transferred to the acceptor end of tRNA(Tyr). The sequence is that of Tyrosine--tRNA ligase from Streptomyces coelicolor (strain ATCC BAA-471 / A3(2) / M145).